A 288-amino-acid polypeptide reads, in one-letter code: Pantothenate synthetase (288 aa).

27–34 (MGALHEGH) provides a ligand contact to ATP. The Proton donor role is filled by His34. (R)-pantoate-binding residues include Gln58 and Gln150. Gln58 lines the beta-alanine pocket. Residues Leu173 and 181–184 (YSSR) contribute to the ATP site.

The protein belongs to the pantothenate synthetase family. Homodimer.

The protein localises to the cytoplasm. It carries out the reaction (R)-pantoate + beta-alanine + ATP = (R)-pantothenate + AMP + diphosphate + H(+). The protein operates within cofactor biosynthesis; (R)-pantothenate biosynthesis; (R)-pantothenate from (R)-pantoate and beta-alanine: step 1/1. Its function is as follows. Catalyzes the condensation of pantoate with beta-alanine in an ATP-dependent reaction via a pantoyl-adenylate intermediate. The protein is Pantothenate synthetase of Tropheryma whipplei (strain TW08/27) (Whipple's bacillus).